The primary structure comprises 518 residues: MKFNIKNGTPEKQRSACVVAGIFEQQKLTPAAEALDKSANGYITGILSRGDMKGKAGATLMLHNVPNSACERVLLVGLGKEQELGDKGYRDAVRAVFKALSDTGAADATLFLLEAPVKNRDLSWKVLQIAVGGLESMYRFDRLKSKVEEAEPKLQKITLGIIKSLTEEEQTASEEALQQGLAVGDGMSLAKDLGNLAPNICTPTYLAEQAMNMAKTYKLKVTVLEQKDMEDLGMGALLAVARGSRQPPKLIALEYWGGAKKGKPVVLVGKGVTFDTGGISLKPAGEMDEMKYDMCGAASVLGTVHAVAKMGLPINVVGIIPATENMPGGNATKPGDVVTSMSGQTIEILNTDAEGRLILCDALAYTERYEPEAVIDIATLTGACVIALGHVASGLLSNDDELARELLDASERAVDRAWRLPLFDEYQEQLKSNFADVANIGGRAAGTITAACFLARFTKKYRWAHLDIAGTAWKSGKEKGATGRPVPLLTQFLISRTTRQPGSTGETGSRKNRRKSKE.

2 residues coordinate Mn(2+): lysine 270 and aspartate 275. Lysine 282 is an active-site residue. Residues aspartate 293, aspartate 352, and glutamate 354 each coordinate Mn(2+). The active site involves arginine 356. Residues 495 to 507 show a composition bias toward polar residues; that stretch reads SRTTRQPGSTGET. Residues 495-518 are disordered; it reads SRTTRQPGSTGETGSRKNRRKSKE.

The protein belongs to the peptidase M17 family. Mn(2+) serves as cofactor.

The protein resides in the cytoplasm. The catalysed reaction is Release of an N-terminal amino acid, Xaa-|-Yaa-, in which Xaa is preferably Leu, but may be other amino acids including Pro although not Arg or Lys, and Yaa may be Pro. Amino acid amides and methyl esters are also readily hydrolyzed, but rates on arylamides are exceedingly low.. The enzyme catalyses Release of an N-terminal amino acid, preferentially leucine, but not glutamic or aspartic acids.. Functionally, presumably involved in the processing and regular turnover of intracellular proteins. Catalyzes the removal of unsubstituted N-terminal amino acids from various peptides. The polypeptide is Probable cytosol aminopeptidase (Nitrosospira multiformis (strain ATCC 25196 / NCIMB 11849 / C 71)).